Reading from the N-terminus, the 233-residue chain is Glycerol-3-phosphate acyltransferase 5 (233 aa).

5 helical membrane passes run 3 to 23 (LVFI…MAYL), 69 to 89 (MILL…VGLF), 116 to 136 (LVMA…FGLF), 143 to 163 (VFLG…FFGI), and 168 to 188 (TISW…LMAP).

This sequence belongs to the PlsY family. In terms of assembly, probably interacts with PlsX.

It localises to the cell membrane. It carries out the reaction an acyl phosphate + sn-glycerol 3-phosphate = a 1-acyl-sn-glycero-3-phosphate + phosphate. It functions in the pathway lipid metabolism; phospholipid metabolism. Its function is as follows. Catalyzes the transfer of an acyl group from acyl-phosphate (acyl-PO(4)) to glycerol-3-phosphate (G3P) to form lysophosphatidic acid (LPA). This enzyme utilizes acyl-phosphate as fatty acyl donor, but not acyl-CoA or acyl-ACP. The sequence is that of Glycerol-3-phosphate acyltransferase 5 from Dehalococcoides mccartyi (strain ATCC BAA-2266 / KCTC 15142 / 195) (Dehalococcoides ethenogenes (strain 195)).